The following is a 128-amino-acid chain: Large ribosomal subunit protein bL19 (128 aa).

It belongs to the bacterial ribosomal protein bL19 family.

In terms of biological role, this protein is located at the 30S-50S ribosomal subunit interface and may play a role in the structure and function of the aminoacyl-tRNA binding site. The polypeptide is Large ribosomal subunit protein bL19 (Janthinobacterium sp. (strain Marseille) (Minibacterium massiliensis)).